The sequence spans 150 residues: Large ribosomal subunit protein uL11 (150 aa).

Belongs to the universal ribosomal protein uL11 family. As to quaternary structure, part of the ribosomal stalk of the 50S ribosomal subunit. Interacts with L10 and the large rRNA to form the base of the stalk. L10 forms an elongated spine to which L12 dimers bind in a sequential fashion forming a multimeric L10(L12)X complex. In terms of processing, one or more lysine residues are methylated.

In terms of biological role, forms part of the ribosomal stalk which helps the ribosome interact with GTP-bound translation factors. This Azobacteroides pseudotrichonymphae genomovar. CFP2 protein is Large ribosomal subunit protein uL11.